Reading from the N-terminus, the 193-residue chain is CASP-like protein 2U1 (193 aa).

The Cytoplasmic segment spans residues 1 to 18 (MAMALALGGGQDAERKVK). The helical transmembrane segment at 19-39 (VAEVALRALLCGLGALAAALV) threads the bilayer. The Extracellular segment spans residues 40–61 (ATDTQTRTFFSLQKKASYTDMK). A helical membrane pass occupies residues 62-82 (AMVFLVDAAAVAAGYSLLQLA). Topologically, residues 83–113 (ARCCGGGAMSSGRGDGGGRGRALSWCVFSCD) are cytoplasmic. The chain crosses the membrane as a helical span at residues 114–134 (QALAYVLLAAVAAALQASVVA). Residues 135 to 156 (KRGQPELQWMGICALYGAFCRQ) are Extracellular-facing. The helical transmembrane segment at 157 to 177 (AGAGLATAVVAGLAAVLLAFL) threads the bilayer. The Cytoplasmic segment spans residues 178–193 (SAFNLFRLYGSGGTKS).

Belongs to the Casparian strip membrane proteins (CASP) family. As to quaternary structure, homodimer and heterodimers.

Its subcellular location is the cell membrane. The polypeptide is CASP-like protein 2U1 (Sorghum bicolor (Sorghum)).